The sequence spans 698 residues: Probable Xaa-Pro aminopeptidase P (698 aa).

Residues D509, D520, E604, and E618 each coordinate Mn(2+).

This sequence belongs to the peptidase M24B family. The cofactor is Mn(2+).

It carries out the reaction Release of any N-terminal amino acid, including proline, that is linked to proline, even from a dipeptide or tripeptide.. In terms of biological role, catalyzes the removal of a penultimate prolyl residue from the N-termini of peptides. The sequence is that of Probable Xaa-Pro aminopeptidase P (AMPP) from Arthroderma benhamiae (strain ATCC MYA-4681 / CBS 112371) (Trichophyton mentagrophytes).